We begin with the raw amino-acid sequence, 727 residues long: Elongation factor 2 (727 aa).

A tr-type G domain is found at 19 to 260; it reads DQIRNMGICA…MAITHLPNPL (242 aa). Residues 28–35, 94–98, and 148–151 contribute to the GTP site; these read AHIDHGKT, DTPGH, and NKVD. Histidine 603 carries the diphthamide modification.

Belongs to the TRAFAC class translation factor GTPase superfamily. Classic translation factor GTPase family. EF-G/EF-2 subfamily.

The protein localises to the cytoplasm. Catalyzes the GTP-dependent ribosomal translocation step during translation elongation. During this step, the ribosome changes from the pre-translocational (PRE) to the post-translocational (POST) state as the newly formed A-site-bound peptidyl-tRNA and P-site-bound deacylated tRNA move to the P and E sites, respectively. Catalyzes the coordinated movement of the two tRNA molecules, the mRNA and conformational changes in the ribosome. This is Elongation factor 2 from Methanococcus maripaludis (strain C6 / ATCC BAA-1332).